The chain runs to 497 residues: Di-/tripeptide transporter (497 aa).

Topologically, residues 1-36 (MQNLNKTEKTFFGQPRGLLTLFQTEFWERFSYYGMR) are cytoplasmic. A helical transmembrane segment spans residues 37 to 55 (AILVYYLYALTTADNAGLG). The Extracellular portion of the chain corresponds to 56-64 (LPKAQAMAI). A helical transmembrane segment spans residues 65 to 83 (VSIYGALVYLSTIVGGWVA). At 84–92 (DRLLGASRT) the chain is on the cytoplasmic side. The helical transmembrane segment at 93 to 111 (IFLGGILITLGHVALATPF) threads the bilayer. The Extracellular segment spans residues 112-115 (GLSS). The chain crosses the membrane as a helical span at residues 116–134 (LFVALFLIILGTGMLKPNI). Over 135–154 (SNMVGHLYSKDDSRRDTGFN) the chain is Cytoplasmic. The helical transmembrane segment at 155-173 (IFVVGINMGSLIAPLIVGT) threads the bilayer. Residues 174–181 (VGQGVNYH) are Extracellular-facing. The chain crosses the membrane as a helical span at residues 182 to 200 (LGFSLAAIGMIFALFAYWY). The Cytoplasmic segment spans residues 201–224 (GRLRHFPEIGREPSNPMDAKAKRN). The helical transmembrane segment at 225–243 (FIITLTIVLIVALIGFFLI) threads the bilayer. Residues 244–254 (YQASPANFINN) are Extracellular-facing. A helical membrane pass occupies residues 255–273 (FINVLSIIGIVVPIIYFVM). At 274–293 (MFTSKKVESDERRKLTAYIP) the chain is on the cytoplasmic side. A helical transmembrane segment spans residues 294–312 (LFLSAIVFWAIEEQSSTII). Over 313–335 (AVWGESRSNLNPTWFGFTFHIDP) the chain is Extracellular. A helical membrane pass occupies residues 336 to 354 (SWYQLLNPLFIVLLSPIFV). The Cytoplasmic portion of the chain corresponds to 355 to 372 (RIWNKLGDRQPSTIVKFG). Residues 373-391 (LGLMLTGASYLIMTLPGLL) form a helical membrane-spanning segment. The Extracellular segment spans residues 392–425 (NGTSGRASALWLVLMFAVQMAGELLVSPVGLSVS). A helical transmembrane segment spans residues 426 to 444 (TKLAPVAFQSQMMAMWFLA). At 445–497 (DSTSQAINAQITPIFKAATEVHFFAITGIIGIIVGIILLIIKKPILKLMGDVR) the chain is on the cytoplasmic side.

Belongs to the major facilitator superfamily. Proton-dependent oligopeptide transporter (POT/PTR) (TC 2.A.17) family.

Its subcellular location is the cell membrane. Functionally, proton-dependent uptake of di- or tri-peptides. The protein is Di-/tripeptide transporter (dtpT) of Lactococcus lactis subsp. cremoris (Streptococcus cremoris).